A 524-amino-acid chain; its full sequence is MPLLDGDLEGSGKHSSRKVDSPFGPGSPSKGFFSRGPQPRPPSPMSAPVRPKTSPGSPKTVFPFSYQESPPRSPRRMSFSGIFRSSSKESSPNSNPATSPGGIRFFSRSRKTSGLSSSPSTPTQVTKQHTFPLESYKHEPERLENRIYASSSPPDTGQRFCPSSFQSPTRPPLASPTHYAPSKAAALAAALGPAEAGMLEKLEFEDEVEDSESGVYMRFMRSHKCYDIVPTSSKLVVFDTTLQVKKAFFALVANGVRAAPLWESKKQSFVGMLTITDFINILHRYYKSPMVQIYELEEHKIETWRELYLQETFKPLVNISPDASLLDAVYSLIKNKIHRLPVIDPISGNALYILTHKRILKFLQLFMSDMPKPAFMKQNLDELGIGTYHNIAFIHPDTPIIKALNIFVERRISALPVVDESGKVVDIYSKFDVINLAAEKTYNNLDITVTQALQHRSQYFEGVVKCNKLEILETIVDRIVRAEVHRLVVANEADSIVGIISLSDILQALILTPAGAKQKETETE.

Residues 1–178 (MPLLDGDLEG…TRPPLASPTH (178 aa)) form a disordered region. Residues S21, S27, S29, S46, S94, S99, S117, and S118 each carry the phosphoserine modification. The segment covering 112–123 (TSGLSSSPSTPT) has biased composition (low complexity). T121 carries the phosphothreonine modification. The segment covering 135–145 (SYKHEPERLEN) has biased composition (basic and acidic residues). Over residues 148–168 (YASSSPPDTGQRFCPSSFQSP) the composition is skewed to polar residues. S152 is modified (phosphoserine). 3 consecutive CBS domains span residues 230–290 (PTSS…KSPM), 312–370 (TFKP…MSDM), and 385–447 (IGTY…NLDI). Residues R257, 272–277 (MLTITD), V317, 338–339 (HR), and K357 contribute to the ADP site. Residues R257, 272 to 277 (MLTITD), V317, H338, 338 to 339 (HR), K357, T387, A392, 413 to 414 (SA), 429 to 432 (SKFD), R456, H485, 485 to 486 (HR), and 501 to 504 (SLSD) contribute to the AMP site. ATP-binding positions include R257, 272–277 (MLTITD), V317, 338–339 (HR), R339, and K357. The AMPK pseudosubstrate signature appears at 325 to 346 (LLDAVYSLIKNKIHRLPVIDPI). Residues 429 to 432 (SKFD), R456, and 485 to 486 (HR) contribute to the ADP site. Residues 429-432 (SKFD), R456, and 485-486 (HR) each bind ATP. In terms of domain architecture, CBS 4 spans 459-517 (YFEGVVKCNKLEILETIVDRIVRAEVHRLVVANEADSIVGIISLSDILQALILTPAGAK).

This sequence belongs to the 5'-AMP-activated protein kinase gamma subunit family. As to quaternary structure, AMPK is a heterotrimer of an alpha catalytic subunit (PRKAA1 or PRKAA2), a beta (PRKAB1 or PRKAB2) and a gamma non-catalytic subunits (PRKAG1, PRKAG2 or PRKAG3). Interacts with FNIP1 and FNIP2. Post-translationally, phosphorylated by ULK1; leading to negatively regulate AMPK activity and suggesting the existence of a regulatory feedback loop between ULK1 and AMPK. In terms of processing, glycosylated; O-GlcNAcylated by OGT, promoting the AMP-activated protein kinase (AMPK) activity.

Functionally, AMP/ATP-binding subunit of AMP-activated protein kinase (AMPK), an energy sensor protein kinase that plays a key role in regulating cellular energy metabolism. In response to reduction of intracellular ATP levels, AMPK activates energy-producing pathways and inhibits energy-consuming processes: inhibits protein, carbohydrate and lipid biosynthesis, as well as cell growth and proliferation. AMPK acts via direct phosphorylation of metabolic enzymes, and by longer-term effects via phosphorylation of transcription regulators. Also acts as a regulator of cellular polarity by remodeling the actin cytoskeleton; probably by indirectly activating myosin. Gamma non-catalytic subunit mediates binding to AMP, ADP and ATP, leading to activate or inhibit AMPK: AMP-binding results in allosteric activation of alpha catalytic subunit (PRKAA1 or PRKAA2) both by inducing phosphorylation and preventing dephosphorylation of catalytic subunits. ADP also stimulates phosphorylation, without stimulating already phosphorylated catalytic subunit. ATP promotes dephosphorylation of catalytic subunit, rendering the AMPK enzyme inactive. The sequence is that of 5'-AMP-activated protein kinase subunit gamma-2 (PRKAG2) from Pongo abelii (Sumatran orangutan).